A 262-amino-acid polypeptide reads, in one-letter code: Hydroxyethylthiazole kinase (262 aa).

A substrate-binding site is contributed by M44. 2 residues coordinate ATP: R118 and S166. G193 lines the substrate pocket.

This sequence belongs to the Thz kinase family. Mg(2+) is required as a cofactor.

It carries out the reaction 5-(2-hydroxyethyl)-4-methylthiazole + ATP = 4-methyl-5-(2-phosphooxyethyl)-thiazole + ADP + H(+). Its pathway is cofactor biosynthesis; thiamine diphosphate biosynthesis; 4-methyl-5-(2-phosphoethyl)-thiazole from 5-(2-hydroxyethyl)-4-methylthiazole: step 1/1. In terms of biological role, catalyzes the phosphorylation of the hydroxyl group of 4-methyl-5-beta-hydroxyethylthiazole (THZ). This is Hydroxyethylthiazole kinase from Chlamydia abortus (strain DSM 27085 / S26/3) (Chlamydophila abortus).